The following is a 363-amino-acid chain: Ribonuclease P protein subunit p40 (363 aa).

As to quaternary structure, component of nuclear RNase P and RNase MRP ribonucleoproteins. RNase P consists of a catalytic RNA moiety and about 10 protein subunits; POP1, POP4, POP5, POP7, RPP14, RPP21, RPP25, RPP30, RPP38 and RPP40. Within the RNase P complex, POP1, POP7 and RPP25 form the 'finger' subcomplex, POP5, RPP14, RPP40 and homodimeric RPP30 form the 'palm' subcomplex, and RPP21, POP4 and RPP38 form the 'wrist' subcomplex. All subunits of the RNase P complex interact with the catalytic RNA. Several subunits of RNase P are also part of the RNase MRP complex. RNase MRP consists of a catalytic RNA moiety and about 8 protein subunits; POP1, POP7, RPP25, RPP30, RPP38, RPP40 and possibly also POP4 and POP5.

Its subcellular location is the nucleus. The protein resides in the nucleolus. In terms of biological role, component of ribonuclease P, a ribonucleoprotein complex that generates mature tRNA molecules by cleaving their 5'-ends. Also a component of the MRP ribonuclease complex, which cleaves pre-rRNA sequences. This chain is Ribonuclease P protein subunit p40 (Rpp40), found in Rattus norvegicus (Rat).